The chain runs to 363 residues: DNA replication and repair protein RecF (363 aa).

30–37 (GPNGSGKT) contacts ATP.

The protein belongs to the RecF family.

The protein localises to the cytoplasm. The RecF protein is involved in DNA metabolism; it is required for DNA replication and normal SOS inducibility. RecF binds preferentially to single-stranded, linear DNA. It also seems to bind ATP. The chain is DNA replication and repair protein RecF from Vibrio cholerae serotype O1 (strain ATCC 39541 / Classical Ogawa 395 / O395).